The following is a 1254-amino-acid chain: Structural polyprotein (1254 aa).

Residues 1–33 (MFPFQPMYPMQPMPYRNPFAAPRRPWFPRTDPF) form a necessary for nucleocapsid assembly and virus assembly region. Residues 33–68 (FLAMQVQELTRSMANLTFKQRRDAPPEGPSAKKPKK) are host transcription inhibition. A Supraphysiological nuclear export signal motif is present at residues 41-48 (LTRSMANL). The interval 45 to 119 (MANLTFKQRR…KKPGKRQRMV (75 aa)) is disordered. The Nuclear localization signal motif lies at 64-68 (KKPKK). Basic residues predominate over residues 80-92 (GKKKKNQGKKKAK). Residues 91–127 (AKTGPPNPKAQNGNKKKTNKKPGKRQRMVMKLESDKT) are binding to the viral RNA. Phosphothreonine is present on residues threonine 93 and threonine 108. Over residues 104–118 (NKKKTNKKPGKRQRM) the composition is skewed to basic residues. Positions 112–126 (PGKRQRMVMKLESDK) are ribosome-binding. The residue at position 124 (serine 124) is a Phosphoserine. Positions 126–275 (KTFPIMLEGK…KYTPENCEQW (150 aa)) constitute a Peptidase S3 domain. Residue threonine 127 is modified to Phosphothreonine. Catalysis depends on charge relay system residues histidine 152, aspartate 174, and serine 226. The segment at 276 to 287 (SLVTTMCLLANV) is functions as an uncleaved signal peptide for the precursor of protein E3/E2. Residues 276–701 (SLVTTMCLLA…HYYHRYPMST (426 aa)) are Extracellular-facing. 3 N-linked (GlcNAc...) asparagine; by host glycosylation sites follow: asparagine 286, asparagine 546, and asparagine 652. Residues 702–722 (ILGLSICAAIATVSVAASTWL) form a helical membrane-spanning segment. Over 723-757 (FCRSRVACLTPYRLTPNARIPFCLAVLCCARTARA) the chain is Cytoplasmic. 3 S-palmitoyl cysteine; by host lipidation sites follow: cysteine 730, cysteine 750, and cysteine 751. Topologically, residues 758–772 (ETTWESLDHLWNNNQ) are extracellular. A helical transmembrane segment spans residues 773 to 793 (QMFWIQLLIPLAALIVVTRLL). At 794-795 (RC) the chain is on the cytoplasmic side. Residues 796-816 (VCCVVPFLVMAGAAAPAYEHA) traverse the membrane as a helical segment. The Extracellular segment spans residues 817-1224 (TTMPSQAGIS…SKTAWTWLTS (408 aa)). 4 disulfide bridges follow: cysteine 861-cysteine 926, cysteine 874-cysteine 906, cysteine 875-cysteine 908, and cysteine 880-cysteine 890. The interval 896–913 (VYPFMWGGAYCFCDTENT) is E1 fusion peptide loop. N-linked (GlcNAc...) asparagine; by host glycosylation occurs at asparagine 946. 4 disulfide bridges follow: cysteine 1071-cysteine 1083, cysteine 1113-cysteine 1188, cysteine 1118-cysteine 1192, and cysteine 1140-cysteine 1182. Residues 1225–1245 (LLGGSAVIIIIGLVLATIVAM) form a helical membrane-spanning segment. Residues 1246-1254 (YVLTNQKHN) are Cytoplasmic-facing.

As to quaternary structure, homodimer. Homomultimer. Interacts with host karyopherin KPNA4; this interaction allows the nuclear import of the viral capsid protein. Interacts with spike glycoprotein E2. Interacts with host IRAK1; the interaction leads to inhibition of IRAK1-dependent signaling. Part of a tetrameric complex composed of host CRM1, host importin alpha/beta dimer and the viral capsid; this complex blocks the receptor-mediated transport through the nuclear pore. Interacts with host phosphatase PPP1CA; this interaction dephosphorylates the capsid protein, which increases its ability to bind to the viral genome. In terms of assembly, the precursor of protein E3/E2 and E1 form a heterodimer shortly after synthesis. Interacts with spike glycoprotein E2. The precursor of protein E3/E2 and E1 form a heterodimer shortly after synthesis. Processing of the precursor of protein E3/E2 into E2 and E3 results in a heterodimer of the spike glycoproteins E2 and E1. Spike at virion surface are constituted of three E2-E1 heterodimers. After target cell attachment and endocytosis, E1 change conformation to form homotrimers. Interacts with 6K protein. Interacts (via fusion peptide loop) with host LDLRAD3 (via domain LDL-receptor class A 1); this interaction mediates viral entry to the host cell. 2 adjacent E2-E1 heterodimers in the trimeric spike interact with host LDLRAD3. As to quaternary structure, interacts with spike glycoprotein E1. Processing of the precursor of protein E3/E2 into E2 and E3 results in a heterodimer of the spike glycoproteins E2 and E1. Spike at virion surface are constituted of a trimer of E2-E1 heterodimers. Interacts with 6K protein. Interacts with host LDLRAD3 (via domain LDL-receptor class A 1); this interaction mediates viral entry to the host cell. 2 adjacent E2-E1 heterodimers in the trimeric spike interact with host LDLRAD3. In terms of assembly, oligomer. Interacts with spike glycoprotein E1. Interacts with spike glycoprotein E2. In terms of processing, structural polyprotein: Specific enzymatic cleavages in vivo yield mature proteins. Capsid protein is auto-cleaved during polyprotein translation, unmasking a signal peptide at the N-terminus of the precursor of E3/E2. The remaining polyprotein is then targeted to the host endoplasmic reticulum, where host signal peptidase cleaves it into pE2, 6K and E1 proteins. pE2 is further processed to mature E3 and E2 by host furin in trans-Golgi vesicle. Post-translationally, phosphorylated on serine and threonine residues. Palmitoylated via thioester bonds. These palmitoylations may induce disruption of the C-terminus transmembrane. This would result in the reorientation of E2 C-terminus from lumenal to cytoplasmic side. In terms of processing, N-glycosylated. Post-translationally, palmitoylated via thioester bonds.

The protein localises to the virion. Its subcellular location is the host cytoplasm. It localises to the host cell membrane. It is found in the host nucleus. The protein resides in the virion membrane. It carries out the reaction Autocatalytic release of the core protein from the N-terminus of the togavirus structural polyprotein by hydrolysis of a -Trp-|-Ser- bond.. In terms of biological role, forms an icosahedral capsid with a T=4 symmetry composed of 240 copies of the capsid protein surrounded by a lipid membrane through which penetrate 80 spikes composed of trimers of E1-E2 heterodimers. The capsid protein binds to the viral RNA genome at a site adjacent to a ribosome binding site for viral genome translation following genome release. Possesses a protease activity that results in its autocatalytic cleavage from the nascent structural protein. Following its self-cleavage, the capsid protein transiently associates with ribosomes, and within several minutes the protein binds to viral RNA and rapidly assembles into icosahedric core particles. The resulting nucleocapsid eventually associates with the cytoplasmic domain of the spike glycoprotein E2 at the cell membrane, leading to budding and formation of mature virions. In case of infection, new virions attach to target cells and after clathrin-mediated endocytosis their membrane fuses with the host endosomal membrane. This leads to the release of the nucleocapsid into the cytoplasm, followed by an uncoating event necessary for the genomic RNA to become accessible. The uncoating might be triggered by the interaction of capsid proteins with ribosomes. Binding of ribosomes would release the genomic RNA since the same region is genomic RNA-binding and ribosome-binding. Specifically inhibits interleukin-1 receptor-associated kinase 1/IRAK1-dependent signaling during viral entry, representing a means by which the alphaviruses may evade innate immune detection and activation prior to viral gene expression. Inhibits host transcription. Forms a tetrameric complex with XPO1/CRM1 and the nuclear import receptor importin. This complex blocks the central channel of host nuclear pores thereby inhibiting the receptor-mediated nuclear transport and thus the host mRNA and rRNA transcription. The inhibition of transcription is linked to a cytopathic effect on the host cell. Its function is as follows. Provides the signal sequence for the translocation of the precursor of protein E3/E2 to the host endoplasmic reticulum. Furin-cleaved E3 remains associated with spike glycoprotein E1 and mediates pH protection of the latter during the transport via the secretory pathway. After virion release from the host cell, the assembly protein E3 is gradually released in the extracellular space. Plays a role in viral attachment to target host cell, by binding to the cell receptor LDLRAD3. Synthesized as a p62 precursor which is processed by furin at the cell membrane just before virion budding, giving rise to E2-E1 heterodimer. The p62-E1 heterodimer is stable, whereas E2-E1 is unstable and dissociate at low pH. p62 is processed at the last step, presumably to avoid E1 fusion activation before its final export to cell surface. E2 C-terminus contains a transitory transmembrane that would be disrupted by palmitoylation, resulting in reorientation of the C-terminal tail from lumenal to cytoplasmic side. This step is critical since E2 C-terminus is involved in budding by interacting with capsid proteins. This release of E2 C-terminus in cytoplasm occurs lately in protein export, and precludes premature assembly of particles at the endoplasmic reticulum membrane. Functionally, acts as a viroporin that participates in virus glycoprotein processing and transport to the plasma membrane, cell permeabilization and budding of viral particles. Disrupts the calcium homeostasis of the cell, probably at the endoplasmic reticulum level. This leads to cytoplasmic calcium elevation. Because of its lipophilic properties, the 6K protein is postulated to influence the selection of lipids that interact with the transmembrane domains of the glycoproteins, which, in turn, affects the deformability of the bilayer required for the extreme curvature that occurs as budding proceeds. Present in low amount in virions, about 3% compared to viral glycoproteins. In terms of biological role, class II viral fusion protein. Fusion activity is inactive as long as E1 is bound to E2 in mature virion. After virus attachment to cell receptor LDLRAD3 and endocytosis, acidification of the endosome induce dissociation of E1/E2 heterodimer and concomitant trimerization of the E1 subunits. This E1 trimer is fusion active, and promotes release of viral nucleocapsid in cytoplasm after endosome and viral membrane fusion. Efficient fusion requires the presence of cholesterol and sphingolipid in the target membrane. The chain is Structural polyprotein from Bos taurus (Bovine).